The primary structure comprises 3241 residues: MSQRGKRGNQQHHQSHHPPPQQHQRKDVEPQPPPTKRRKGRPPNGATTAAVAEVTGSGPATGSERVPVLPLCKSKHEEPGAEAGGGGQGRAAAGATSTSKSKSTKLAKSASKCKSQGASSSSSWQARSVADIKMSSIYNRSSTEAPAELYRKDLISAMKLPDSEPLANYEYLIVTDPWKQEWEKGVQVPVNPDSLPEPCVYVLPEPVVSPAHDFKLPKNRYLRITKDEHYSPDLHYLTNVVALAENTCAYDIDPIDEAWLRLYNSDRAQCGAFPINATQFERVIEELEVRCWEQIQVILKLEEGLGIEFDENVICDVCRSPDSEEANEMVFCDNCNICVHQACYGITAIPSGQWLCRTCSMGIKPDCVLCPNKGGAMKSNKSGKHWAHVSCALWIPEVSIGCVDRMEPITKISSIPQSRWSLICVLCRKRVGSCIQCSVKPCKTAYHVTCAFQHGLEMRAIIEEGNAEDGVKLRSYCQKHSMSKGKKENAGSHGGGSASVASAMQKANRYGSGAGGGADDGNNACGTTGEDPRRRKNHRKTELTSEERNQARAQRLQEVEAEFDKHVNFNDISCHLFDVDDDAIVAIYNYWKLKRKSRHNRELIPPKSEDVEMIARKQEQQDMENHKLVVHLRQDLERVRNLCYMVSRREKLSRSLFKLREQVFYKQLGVLDEMRLEKQQTKQEQQQPVMDLNAVIYANDGPTLYDRFYSSVGGQTVPAQYQDLKYILEQLMGKLQSGKQGRGRASQSPNKRKQPAKASPNKKLNNGILSSRTSSPEKTVAGSKVGTTTSKVRSPPGKNPTGRRASKSSAAAATSTHNKSQFHSNIRSSTTSHSSSGTISSGNSSSANGTSSSDSSSGSDSGSESGSSSAGSGVSKRKSSSGSPLKKQSYARSVEQRQKQRQRRQNEAVAGASATYPDSRSASSSSDGEDERCRNRQEPERGARRGPIQSKSVPNRSQASRSKPTTEADVGEGTGASARRKLSTTTRGLAQMDKDADESVSSDESEELLPLRGERQRESTTTSGLATTGSAIGRNLGQHIYSDSESSSSEQEKDQEEQATVESNVSDSQNQQTIRTKAAMKEFVPGTAATTSSTSQAASSTSKAKNTREGKEGAASIGNSTKTKPNPNAKLYPADLLVVPQRQAAKKASENMRSTNLATTLQPDVSDRVREPDINSISGTAKSKVKDSSSRVSNEADKSSLEKVRPKEHLQKTVGKTSESAPAERGKRGRPPKVPKDARPPSITENDKPALPTHTQSKPPSVVATPVSAKSNFAVSLVPQRQAAKKAAEQLKSSKPVLESFSTGNDISDKETVTSATISGSGSSVPAASTPVKPTRRSSIKEAPITPKEPLSGRRKSKEDLLATPIKTTPLVKRRVVVPNLSSSSSGDSESSSSSSSSGSSSSSGGSDSDSESQASNSENPSSREPPVAPAKVPSDSSLVPKRSPRKSMDKPSALTIAPASVNVLNIPSTRSRQNSTTKSTKVALQKAVQSVEDDVKCTPKTNRLQGSMDECGKQVQLEQATKRATRGSKSRPPSPTAKSSPEKTVSRCKSRAEESPKKVANLEQEISQRKVASGKGTSSLDKLLNKKQQQMNHSAQATPPPISPTPPASETRIVKDQCDLKPDEVSIQQINLGADAQPEPDLDPESAAEAGELPMDIDEELTTAPTRTQLSASASKLADIIDDERPPAAPLPASPTPTPTSNDEMSDAGSDLSERRRMRWRSRRRRRRRSHEPDEEHTHHTQHLLNEMEMARELEEERKNELLANASKYSASTSSPAVTVIPPDPPEIIELDSNSAEQQQQHLHDQPLPPPLVVQSPAADVVPTVMQQQLLPSQRPLIEQLPVEHLPIVETILEMEDSKFANNFASNLASVLNPPNQMSLIGSSIDRSKQISEEDSIQATRNLLEKLRKTKRKAQDDCSSKEAVDLLPPTPAIPSVFPFHNAADPEDIIHAQKEQQHQQQQQLQSSQTCIYGNSSGPNSVASLTIKDSPMTANSGSYANSLTNTPNATPTNATMNNLGYQVNFPNSQPPPTLGLFLEKSPHQKGACPLSSNGGANVGQPAPTPDFVDLAAAAVKNTLGSFRGAATVPTQSGTGVNAKINDYDESTRMQSPFGGMPWNESDLIAERRSSSPSSVSESNDPPQPPPVVTATATTARSLAQLESCKNFFNSYPSGNAGPGTAANATAPFNHPPMVNGIDSIPMFNNTNTTQHQPTTPAHQQQQQRTPNNQYNGTIYPQLAGIMHPQTTPTEPPSSLYGNGGVGGAVQSTTLPPPAQVNQYPGTPYSATTLGMISVQQPALSTVPVQTATTPNNPFTLTSPIDGKMPTYPAQLLSSCAEAVVASMMPPTPPVTATAKDSPSKRTSVSGSNLSKKQTHKSPQLPQGKSPGKSPRQPLQPPTPPAPVPVVALPPTKYDPQTHTLQGKPRQRAPRGSGGSGAPGRGRGRGRGRGRGGGVTSGMAMVLPPPMSDYGSNTHIVNNLVGTPFEFNNEFDDMAGPGVENLQSLRDRRRSFELRAPRVQNKPTTTPTTATTTNPLLHPVLPGPVDMRTYNLGFEAPHSTASQEAYQNNLLGAFDSGTADQTLSEFNEEDERQFQSALRATGTGTSPSKQHSGPTALVAPPTGPNPTPAPNLLLHCTEANQMAPNVAATGAATHLVEGSLVEASLEATSEEVSIDSDSTIPHSKTSTSDARSQIKLKIKSPMAYPEHYNAMTNSSSLTLTSTLVQSSNVVQTTVSTSTVVSASSAVSGNSRRMRKKELLSLYVVQKDNHNDDSSCGLPAASDTLPLENLRKSEEEDELSGGNGTKRFKKNSSSRELRALDANLALVEEQLLSSGAGACGGGSSGDGRRRSACSSGSNNDNNGKTGAASSAGKRRGRSKTLESSEDDHQAPKLKIKIRGLTANETPSGVSSVDEGQNYSYEMTRRACPPKKRLTSNFSTLTLEEIKRDSMNYRKKVMQDFVKGEDSNKRGVVVKDGESLIMPQPPTKRPKSSKPKKEKKEKKRQKQQQLILSSSTTTMTTTLIENTASASPGDKPKLILRFGKRKAETTTRTASLEQPPTLEAPAPLRFKIARNSSGGGYIIGTKAEKKDESTADNTSPITELPLISPLREASPQGRLLNSFTPHSQNANTSPALLGKDTGTPSPPCLVIDSSKSADVHDSTSLPESGEAAMGVQSSLVNATTPLCVNVGNYENSNNSLPSASGTGSASSNSCNSNSINNNGSGGGRASGEGGLLPLKKDCEVR.

Residues 1–16 show a composition bias toward basic residues; that stretch reads MSQRGKRGNQQHHQSH. The interval 1–126 is disordered; it reads MSQRGKRGNQ…GASSSSSWQA (126 aa). Low complexity-rich tracts occupy residues 42-55 and 90-126; these read PPNG…AEVT and RAAA…SWQA. A PHD-type 1 zinc finger spans residues 312–362; that stretch reads NVICDVCRSPDSEEANEMVFCDNCNICVHQACYGITAIPSGQWLCRTCSMG. The C2HC pre-PHD-type zinc finger occupies 364–398; that stretch reads KPDCVLCPNKGGAMKSNKSGKHWAHVSCALWIPEV. A PHD-type 2 zinc finger spans residues 422-481; sequence LICVLCRKRVGSCIQCSVKPCKTAYHVTCAFQHGLEMRAIIEEGNAEDGVKLRSYCQKHS. Disordered stretches follow at residues 482-501, 508-554, 737-1266, 1279-1483, 1500-1613, and 1632-1746; these read MSKG…ASVA, NRYG…ARAQ, SGKQ…VATP, PQRQ…STKV, PKTN…SETR, and NLGA…QHLL. Residues 540 to 554 are compositionally biased toward basic and acidic residues; it reads KTELTSEERNQARAQ. Positions 762–777 are enriched in polar residues; it reads KKLNNGILSSRTSSPE. Positions 807–874 are enriched in low complexity; the sequence is KSSAAAATST…SGSSSAGSGV (68 aa). A compositionally biased stretch (basic and acidic residues) spans 931 to 943; the sequence is ERCRNRQEPERGA. Positions 949–965 are enriched in polar residues; that stretch reads QSKSVPNRSQASRSKPT. The segment covering 995 to 1007 has biased composition (acidic residues); the sequence is DADESVSSDESEE. A compositionally biased stretch (low complexity) spans 1019–1031; the sequence is STTTSGLATTGSA. The segment covering 1060–1075 has biased composition (polar residues); it reads TVESNVSDSQNQQTIR. The segment covering 1087-1104 has biased composition (low complexity); it reads TAATTSSTSQAASSTSKA. 2 stretches are compositionally biased toward polar residues: residues 1117 to 1126 and 1151 to 1163; these read IGNSTKTKPN and NMRS…TLQP. Positions 1184–1211 are enriched in basic and acidic residues; sequence KVKDSSSRVSNEADKSSLEKVRPKEHLQ. The span at 1313-1327 shows a compositional bias: polar residues; that stretch reads VTSATISGSGSSVPA. Thr1346 carries the post-translational modification Phosphothreonine. Ser1352 carries the phosphoserine modification. Phosphothreonine is present on Thr1364. A compositionally biased stretch (low complexity) spans 1382-1426; that stretch reads SSSSSGDSESSSSSSSSGSSSSSGGSDSDSESQASNSENPSSREP. Position 1456 is a phosphothreonine (Thr1456). The span at 1463–1483 shows a compositional bias: polar residues; the sequence is NVLNIPSTRSRQNSTTKSTKV. Basic and acidic residues predominate over residues 1541–1558; that stretch reads SPEKTVSRCKSRAEESPK. Residues 1576–1594 are compositionally biased toward polar residues; the sequence is KGTSSLDKLLNKKQQQMNH. Residues 1599-1608 are compositionally biased toward pro residues; that stretch reads TPPPISPTPP. A compositionally biased stretch (polar residues) spans 1664-1675; it reads TAPTRTQLSASA. The segment covering 1688-1699 has biased composition (pro residues); it reads PAAPLPASPTPT. Positions 1717 to 1731 are enriched in basic residues; it reads RRMRWRSRRRRRRRS. 2 coiled-coil regions span residues 1741–1770 and 1893–1925; these read HTQH…ASKY and SEED…KEAV. Disordered stretches follow at residues 2037 to 2061, 2124 to 2148, 2203 to 2227, 2346 to 2454, 2598 to 2629, 2667 to 2691, 2768 to 2811, 2832 to 2911, 2964 to 3015, 3042 to 3169, and 3184 to 3241; these read LEKS…GQPA, AERR…PVVT, NNTN…TPNN, TPPV…GGVT, ATGT…PAPN, SEEV…ARSQ, NDDS…NSSS, GAGA…SVDE, NKRG…TTTM, KAET…EAAM, and VNVG…CEVR. The segment covering 2359-2381 has biased composition (polar residues); it reads KRTSVSGSNLSKKQTHKSPQLPQ. Pro residues predominate over residues 2392–2402; sequence PLQPPTPPAPV. The segment covering 2430–2439 has biased composition (gly residues); the sequence is GSGGSGAPGR. Polar residues-rich tracts occupy residues 2598-2611 and 2673-2689; these read ATGT…QHSG and DSDS…SDAR. Residues 2855–2865 show a composition bias toward polar residues; sequence NNDNNGKTGAA. Over residues 2876-2887 the composition is skewed to basic and acidic residues; that stretch reads KTLESSEDDHQA. Phosphoserine is present on residues Ser2880 and Ser2881. Over residues 2899–2911 the composition is skewed to polar residues; the sequence is ANETPSGVSSVDE. A compositionally biased stretch (basic and acidic residues) spans 2964-2974; it reads NKRGVVVKDGE. Over residues 2984–3002 the composition is skewed to basic residues; sequence KRPKSSKPKKEKKEKKRQK. Low complexity predominate over residues 3003–3015; sequence QQQLILSSSTTTM. Phosphoserine is present on residues Ser3104 and Ser3110. 2 stretches are compositionally biased toward polar residues: residues 3115-3130 and 3184-3197; these read LLNS…NTSP and VNVG…NSLP. Low complexity predominate over residues 3198–3218; sequence SASGTGSASSNSCNSNSINNN. Over residues 3219–3230 the composition is skewed to gly residues; that stretch reads GSGGGRASGEGG.

The protein belongs to the JADE family.

The protein resides in the nucleus. May function as a negative regulator of the EGFR/Ras/MAPK signaling pathway during eye development. In Drosophila melanogaster (Fruit fly), this protein is PHD finger protein rhinoceros (rno).